Reading from the N-terminus, the 220-residue chain is Ribosomal RNA small subunit methyltransferase G (220 aa).

Residues glycine 78, phenylalanine 83, 129–130 (GE), and arginine 146 each bind S-adenosyl-L-methionine.

This sequence belongs to the methyltransferase superfamily. RNA methyltransferase RsmG family.

Its subcellular location is the cytoplasm. It catalyses the reaction guanosine(527) in 16S rRNA + S-adenosyl-L-methionine = N(7)-methylguanosine(527) in 16S rRNA + S-adenosyl-L-homocysteine. Specifically methylates the N7 position of guanine in position 527 of 16S rRNA. In Geobacter metallireducens (strain ATCC 53774 / DSM 7210 / GS-15), this protein is Ribosomal RNA small subunit methyltransferase G.